Reading from the N-terminus, the 118-residue chain is Vitelline coat lysin (118 aa).

This is Vitelline coat lysin from Tegula pfeifferi (Pfeiffer's top shell).